The sequence spans 220 residues: Protein-methionine-sulfoxide reductase heme-binding subunit MsrQ (220 aa).

A run of 6 helical transmembrane segments spans residues 20-40 (LWLL…LGAT), 51-71 (FEHL…LVTP), 86-106 (ALGL…MVLD), 122-142 (PFIT…LTSN), 153-173 (WSSL…HFLM), and 175-195 (VKSW…LLLW).

This sequence belongs to the MsrQ family. As to quaternary structure, heterodimer of a catalytic subunit (MsrP) and a heme-binding subunit (MsrQ). The cofactor is FMN. Heme b serves as cofactor.

The protein resides in the cell inner membrane. Functionally, part of the MsrPQ system that repairs oxidized periplasmic proteins containing methionine sulfoxide residues (Met-O), using respiratory chain electrons. Thus protects these proteins from oxidative-stress damage caused by reactive species of oxygen and chlorine generated by the host defense mechanisms. MsrPQ is essential for the maintenance of envelope integrity under bleach stress, rescuing a wide series of structurally unrelated periplasmic proteins from methionine oxidation. MsrQ provides electrons for reduction to the reductase catalytic subunit MsrP, using the quinone pool of the respiratory chain. This Brucella melitensis biotype 2 (strain ATCC 23457) protein is Protein-methionine-sulfoxide reductase heme-binding subunit MsrQ.